The primary structure comprises 460 residues: Mogroside I-E synthase (460 aa).

Residue H25 is the Proton acceptor of the active site. D114 serves as the catalytic Charge relay. Residues S286, C339, Q341, W359, N360, S361, E364, D380, and Q381 each coordinate UDP-alpha-D-glucose.

Belongs to the UDP-glycosyltransferase family. In terms of tissue distribution, highly expressed in young fruits 15 days after anthesis (15-DAA).

The enzyme catalyses mogrol + UDP-alpha-D-glucose = mogroside IE + UDP + H(+). It carries out the reaction mogroside I-A1 + UDP-alpha-D-glucose = mogroside IIE + UDP + H(+). The catalysed reaction is mogroside II-A1 + UDP-alpha-D-glucose = mogroside IIIX + UDP + H(+). It catalyses the reaction mogroside II-A + UDP-alpha-D-glucose = mogroside III + UDP + H(+). The enzyme catalyses mogroside III-A1 + UDP-alpha-D-glucose = siamenoside I + UDP + H(+). The protein operates within secondary metabolite biosynthesis; terpenoid biosynthesis. Its function is as follows. UDP-glycosyltransferase involved in the biosynthesis of cucurbitacin and mogroside tetracyclic triterpene natural products (e.g. siamenoside I and mogrosides IV, V and VI). Cucurbitacins have cytotoxic properties and exhibit deterrent taste as a defense barrier against herbivores. Mogrosides are nonsugar highly oxygenated compounds used as high-intensity zero-calorie sweeteners; they also possess pharmacological properties such as regulating immunity, lowering blood sugar and lipid levels, protecting the liver, and acting as antioxidants and antitumor agents. Catalyzes the C3 primary glucosylation of mogrol, mogroside I-A1, mogroside II-A1, mogroside II-A and mogroside III-A1. The polypeptide is Mogroside I-E synthase (Siraitia grosvenorii (Monk's fruit)).